The following is a 482-amino-acid chain: Hydrogenase transcriptional regulatory protein HoxA (482 aa).

One can recognise a Response regulatory domain in the interval 7–121; the sequence is TVLVVDDETR…HLIDTVRQAV (115 aa). Asp-55 carries the 4-aspartylphosphate modification. Residues 167–394 enclose the Sigma-54 factor interaction domain; that stretch reads APGSPLDAVC…LRNEIYRAVA (228 aa). Residues 193–200 and 265–274 contribute to the ATP site; these read GESGTGKE and EIGDTSPAFQ. The segment at residues 456 to 475 is a DNA-binding region (H-T-H motif); the sequence is KTHAAKELGLSRVGLRQKLL.

The protein localises to the cytoplasm. In terms of biological role, probable member of the two-component regulatory system involved in the regulation of the hydrogenase activity. HoxA is probably phosphorylated by a sensory component (which could be HoxX) and then acts in conjunction with sigma-54 as a transcriptional activator. The chain is Hydrogenase transcriptional regulatory protein HoxA (hoxA) from Cupriavidus necator (strain ATCC 17699 / DSM 428 / KCTC 22496 / NCIMB 10442 / H16 / Stanier 337) (Ralstonia eutropha).